The sequence spans 173 residues: Photosystem I assembly protein Ycf3 (173 aa).

TPR repeat units follow at residues 35–68 (AFAY…EEDP), 72–105 (SFIL…NPKM), and 120–153 (GQRS…APNN).

Belongs to the Ycf3 family.

It is found in the cellular thylakoid membrane. Functionally, essential for the assembly of the photosystem I (PSI) complex. May act as a chaperone-like factor to guide the assembly of the PSI subunits. This is Photosystem I assembly protein Ycf3 from Synechococcus elongatus (strain ATCC 33912 / PCC 7942 / FACHB-805) (Anacystis nidulans R2).